The following is a 380-amino-acid chain: NADPH quinone oxidoreductase (380 aa).

The N-terminal 17 residues, 1–17 (MSSFLSKRFISTTQRAM), are a transit peptide targeting the mitochondrion.

The protein belongs to the zinc-containing alcohol dehydrogenase family. Quinone oxidoreductase subfamily. As to quaternary structure, homodimer.

Its subcellular location is the mitochondrion. The enzyme catalyses a quinone + NADH + H(+) = a quinol + NAD(+). The catalysed reaction is a quinone + NADPH + H(+) = a quinol + NADP(+). In terms of biological role, NADPH quinone oxidoreductase that efficiently reduces 1,4-benzoquinone, whereas no activities are found for menadiones and methoxyquinones. In Kluyveromyces marxianus (Yeast), this protein is NADPH quinone oxidoreductase.